Reading from the N-terminus, the 497-residue chain is Mechanosensitive ion channel protein 1, mitochondrial (497 aa).

Residues 1-86 (MAGVRLSLLK…RAFSSKSDDF (86 aa)) constitute a mitochondrion transit peptide. 5 consecutive transmembrane segments (helical) span residues 152 to 172 (DVIV…VVMP), 216 to 236 (LVTF…TIAA), 238 to 258 (YFSP…LYRW), 280 to 300 (VLTL…MASA), and 305 to 325 (VAVQ…AFAA).

This sequence belongs to the MscS (TC 1.A.23) family.

The protein resides in the mitochondrion membrane. In terms of biological role, mechanosensitive channel that opens in response to stretch forces in the membrane lipid bilayer. This Arabidopsis thaliana (Mouse-ear cress) protein is Mechanosensitive ion channel protein 1, mitochondrial (MSL1).